Consider the following 440-residue polypeptide: Protein disulfide-isomerase A6 (440 aa).

An N-terminal signal peptide occupies residues 1-19 (MARLVLGLVSCTFFLAVSG). Thioredoxin domains are found at residues 20–133 (LYSS…ALRQ) and 151–287 (QGRG…EDIA). Residues C55 and C58 are joined by a disulfide bond. A phosphoserine mark is found at S129, S156, and S158. The tract at residues 139–161 (LGGRSGGYSSGKQGRGDSSSKKD) is disordered. The segment covering 152–161 (GRGDSSSKKD) has biased composition (basic and acidic residues). A disulfide bridge connects residues C190 and C193. The interval 399-440 (GGGSFPTITPREPWDGKDGELPVEDDIDLSDVELDDLEKDEL) is disordered. The span at 419–440 (LPVEDDIDLSDVELDDLEKDEL) shows a compositional bias: acidic residues. S428 carries the phosphoserine modification. The short motif at 437–440 (KDEL) is the Prevents secretion from ER element.

It belongs to the protein disulfide isomerase family. Part of a large chaperone multiprotein complex comprising DNAJB11, HSP90B1, HSPA5, HYOU, PDIA2, PDIA4, PDIA6, PPIB, SDF2L1, UGGT1 and very small amounts of ERP29, but not, or at very low levels, CALR nor CANX. Interacts with MICA on the surface of tumor cells, leading to MICA disulfide bond reduction which is required for its release from tumor cells. Interacts with ITGB3 following platelet stimulation. Interacts with ERN1; the interaction is direct. Interacts with EIF2AK3.

It localises to the endoplasmic reticulum lumen. Its subcellular location is the cell membrane. The protein localises to the melanosome. It carries out the reaction Catalyzes the rearrangement of -S-S- bonds in proteins.. In terms of biological role, may function as a chaperone that inhibits aggregation of misfolded proteins. Negatively regulates the unfolded protein response (UPR) through binding to UPR sensors such as ERN1, which in turn inactivates ERN1 signaling. May also regulate the UPR via the EIF2AK3 UPR sensor. Plays a role in platelet aggregation and activation by agonists such as convulxin, collagen and thrombin. The sequence is that of Protein disulfide-isomerase A6 (Pdia6) from Mus musculus (Mouse).